The sequence spans 419 residues: UDP-N-acetylglucosamine 1-carboxyvinyltransferase (419 aa).

A phosphoenolpyruvate-binding site is contributed by 22–23 (KN). Arginine 91 serves as a coordination point for UDP-N-acetyl-alpha-D-glucosamine. Cysteine 115 (proton donor) is an active-site residue. Cysteine 115 is subject to 2-(S-cysteinyl)pyruvic acid O-phosphothioketal. UDP-N-acetyl-alpha-D-glucosamine-binding positions include 120 to 124 (RPVDL), 160 to 163 (KVSV), aspartate 305, and isoleucine 327.

It belongs to the EPSP synthase family. MurA subfamily.

Its subcellular location is the cytoplasm. It catalyses the reaction phosphoenolpyruvate + UDP-N-acetyl-alpha-D-glucosamine = UDP-N-acetyl-3-O-(1-carboxyvinyl)-alpha-D-glucosamine + phosphate. It participates in cell wall biogenesis; peptidoglycan biosynthesis. In vitro inhibited by covalent binding of fosfomycin and the fungal product terreic acid in the presence of substrate UDP-N-acetylglucosamine, with an inactivation rate constant of 130 M(-1)sec(-1) for terreic acid. In terms of biological role, cell wall formation. Adds enolpyruvyl to UDP-N-acetylglucosamine. Target for the antibiotic fosfomycin. The chain is UDP-N-acetylglucosamine 1-carboxyvinyltransferase from Enterobacter cloacae subsp. cloacae (strain ATCC 13047 / DSM 30054 / NBRC 13535 / NCTC 10005 / WDCM 00083 / NCDC 279-56).